The chain runs to 352 residues: Neutral protease 2 (352 aa).

The N-terminal stretch at 1 to 19 (MRVTTLSTALFALASTAVS) is a signal peptide. The propeptide occupies 20-175 (APTAGSSSPG…TKALSQLTRR (156 aa)). Disulfide bonds link Cys-181/Cys-253, Cys-260/Cys-278, and Cys-292/Cys-352. Zn(2+) is bound at residue His-303. Glu-304 is a catalytic residue. 2 residues coordinate Zn(2+): His-307 and Asp-318.

The protein belongs to the peptidase M35 family. The cofactor is Zn(2+).

The enzyme catalyses Preferential cleavage of bonds with hydrophobic residues in P1'. Also 3-Asn-|-Gln-4 and 8-Gly-|-Ser-9 bonds in insulin B chain.. Its function is as follows. Metalloprotease that shows high activities on basic nuclear substrates such as histone and protamine. The sequence is that of Neutral protease 2 from Aspergillus oryzae (strain ATCC 42149 / RIB 40) (Yellow koji mold).